The primary structure comprises 201 residues: Probable nicotinate-nucleotide adenylyltransferase (201 aa).

Belongs to the NadD family.

The enzyme catalyses nicotinate beta-D-ribonucleotide + ATP + H(+) = deamido-NAD(+) + diphosphate. The protein operates within cofactor biosynthesis; NAD(+) biosynthesis; deamido-NAD(+) from nicotinate D-ribonucleotide: step 1/1. Functionally, catalyzes the reversible adenylation of nicotinate mononucleotide (NaMN) to nicotinic acid adenine dinucleotide (NaAD). The protein is Probable nicotinate-nucleotide adenylyltransferase of Clostridium botulinum (strain Loch Maree / Type A3).